A 57-amino-acid polypeptide reads, in one-letter code: Small hydrophobic protein (57 aa).

Residues 1-8 (MPAIQPPL) are Virion surface-facing. A helical membrane pass occupies residues 9–29 (YLTFLLLTLLYLIITLYVWTI). Topologically, residues 30 to 57 (LTINHNTAVRYAALYQRSFSRWGFDQSL) are intravirion.

Belongs to the rubulavirus small hydrophobic protein family. As to quaternary structure, interacts with host TNFRSF1A, RIPK1 and IRAK1; these interactions interfere with host NF-kappa-B activation at the level of receptor complexes. Interacts with host protein UBQLN4.

The protein resides in the virion membrane. The protein localises to the host cell membrane. Functionally, plays a role in the inhibition of the host NF-kappa-B pathway. This inhibition occurs at the receptor level, by preventing the signaling of TNFR1 as well as IL-1R and TLR3. The polypeptide is Small hydrophobic protein (SH) (Mumps virus genotype A (strain Jeryl-Lynn) (MuV)).